A 483-amino-acid chain; its full sequence is FAD-linked oxidoreductase easE (483 aa).

The 184-residue stretch at 10 to 193 folds into the FAD-binding PCMH-type domain; sequence QGRLPFYSAV…TEATVRVFSD (184 aa).

It belongs to the oxygen-dependent FAD-linked oxidoreductase family. FAD serves as cofactor.

Its pathway is alkaloid biosynthesis; ergot alkaloid biosynthesis. FAD-linked oxidoreductase; part of the gene cluster that mediates the biosynthesis of fungal ergot alkaloid. DmaW catalyzes the first step of ergot alkaloid biosynthesis by condensing dimethylallyl diphosphate (DMAP) and tryptophan to form 4-dimethylallyl-L-tryptophan. The second step is catalyzed by the methyltransferase easF that methylates 4-dimethylallyl-L-tryptophan in the presence of S-adenosyl-L-methionine, resulting in the formation of 4-dimethylallyl-L-abrine. The catalase easC and the FAD-dependent oxidoreductase easE then transform 4-dimethylallyl-L-abrine to chanoclavine-I which is further oxidized by easD in the presence of NAD(+), resulting in the formation of chanoclavine-I aldehyde. Agroclavine dehydrogenase easG then mediates the conversion of chanoclavine-I aldehyde to agroclavine via a non-enzymatic adduct reaction: the substrate is an iminium intermediate that is formed spontaneously from chanoclavine-I aldehyde in the presence of glutathione. The presence of easA is not required to complete this reaction. Further conversion of agroclavine to paspalic acid is a two-step process involving oxidation of agroclavine to elymoclavine and of elymoclavine to paspalic acid, the second step being performed by the elymoclavine oxidase cloA. Paspalic acid is then further converted to D-lysergic acid. Ergopeptines are assembled from D-lysergic acid and three different amino acids by the D-lysergyl-peptide-synthetases composed each of a monomudular and a trimodular nonribosomal peptide synthetase subunit. LpsB and lpsC encode the monomodular subunits responsible for D-lysergic acid activation and incorporation into the ergopeptine backbone. LpsA1 and A2 subunits encode the trimodular nonribosomal peptide synthetase assembling the tripeptide portion of ergopeptines. LpsA1 is responsible for formation of the major ergopeptine, ergotamine, and lpsA2 for alpha-ergocryptine, the minor ergopeptine of the total alkaloid mixture elaborated by C.purpurea. D-lysergyl-tripeptides are assembled by the nonribosomal peptide synthetases and released as N-(D-lysergyl-aminoacyl)-lactams. Cyclolization of the D-lysergyl-tripeptides is performed by the Fe(2+)/2-ketoglutarate-dependent dioxygenase easH which introduces a hydroxyl group into N-(D-lysergyl-aminoacyl)-lactam at alpha-C of the aminoacyl residue followed by spontaneous condensation with the terminal lactam carbonyl group. This chain is FAD-linked oxidoreductase easE, found in Claviceps purpurea (strain 20.1) (Ergot fungus).